We begin with the raw amino-acid sequence, 263 residues long: Serine protease ami (263 aa).

The first 21 residues, 1–21, serve as a signal peptide directing secretion; the sequence is MNISRVLFAVVLVLTVSTYEC. Residue Asn2 is glycosylated (N-linked (GlcNAc...) asparagine). Positions 22–26 are cleaved as a propeptide — activation peptide; sequence RPRGR. The Peptidase S1 domain maps to 27 to 254; that stretch reads ILGGQDSKEK…YKSWIMETMY (228 aa). Cys52 and Cys68 are oxidised to a cystine. The active-site Charge relay system is the His67. Residues Asn73, Asn74, and Asn108 are each glycosylated (N-linked (GlcNAc...) asparagine). The Charge relay system role is filled by Asp115. Intrachain disulfides connect Cys149–Cys215, Cys180–Cys196, and Cys205–Cys230. Ser209 (charge relay system) is an active-site residue. N-linked (GlcNAc...) asparagine glycosylation occurs at Asn255.

The protein belongs to the peptidase S1 family. In the embryo, localizes to paraxial regions at the neurula stage and anterior ventral regions at the tailbud stage. From the late tailbud to tadpole stage, expressed along the forming blood vessels including the anterior cardinal veins, posterior cardinal veins, intersomitic veins, dorsal longitudinal anastomosing vessel, dorsal aorta, pronephric sinus and most prominently around the vascular vitelline network, where expression shows left-right asymmetry in the stage 42 embryo. Localizes to endothelial cells. In adults, shows highest expression in liver with moderate levels of expression in the fat body, lung, gut and vessels. Weakly expressed in adult heart, muscle, testis and ovary.

It localises to the secreted. Functionally, probable serine protease. The chain is Serine protease ami from Xenopus laevis (African clawed frog).